The chain runs to 176 residues: Odorant-binding protein 2a (176 aa).

Positions 1 to 19 (MKSLLLTILLLGLVAVLKA) are cleaved as a signal peptide. 2 N-linked (GlcNAc...) asparagine glycosylation sites follow: Asn-42 and Asn-124. An intrachain disulfide couples Cys-79 to Cys-172.

Belongs to the calycin superfamily. Lipocalin family. In terms of tissue distribution, expressed in the liver (at protein level). Expressed in epididymis.

It localises to the secreted. In terms of biological role, involved in the regulation of systematic glucose homeostasis and insulin sensitivity. Involved in the regulation of liver lipid levels by positive regulation of hepatic lipogenesis and negative regulation of fatty acid beta-oxidation; via downstream transcriptional regulation of CPT1A and hepatic lipogenic program gene expression. May regulate hepatic lipogenesis and fatty acid beta-oxidation in an autocrine or paracrine manner. The chain is Odorant-binding protein 2a (Obp2a) from Mus musculus (Mouse).